The following is a 314-amino-acid chain: Ribose-phosphate pyrophosphokinase (314 aa).

Residues 37–39 (DGE) and 96–97 (RQ) each bind ATP. Residues histidine 131 and aspartate 170 each coordinate Mg(2+). The active site involves lysine 194. D-ribose 5-phosphate contacts are provided by residues arginine 196, aspartate 220, and 224–228 (DTGGT).

It belongs to the ribose-phosphate pyrophosphokinase family. Class I subfamily. Homohexamer. The cofactor is Mg(2+).

It localises to the cytoplasm. The enzyme catalyses D-ribose 5-phosphate + ATP = 5-phospho-alpha-D-ribose 1-diphosphate + AMP + H(+). It functions in the pathway metabolic intermediate biosynthesis; 5-phospho-alpha-D-ribose 1-diphosphate biosynthesis; 5-phospho-alpha-D-ribose 1-diphosphate from D-ribose 5-phosphate (route I): step 1/1. In terms of biological role, involved in the biosynthesis of the central metabolite phospho-alpha-D-ribosyl-1-pyrophosphate (PRPP) via the transfer of pyrophosphoryl group from ATP to 1-hydroxyl of ribose-5-phosphate (Rib-5-P). The polypeptide is Ribose-phosphate pyrophosphokinase (Vibrio cholerae serotype O1 (strain ATCC 39315 / El Tor Inaba N16961)).